The sequence spans 69 residues: uncharacterized protein (69 aa).

The N-terminal stretch at Met-1–Ser-18 is a signal peptide. The disordered stretch occupies residues Arg-17–Val-69. Residues Ser-18–Ser-61 show a composition bias toward low complexity.

It localises to the secreted. This is an uncharacterized protein from Dictyostelium discoideum (Social amoeba).